A 452-amino-acid polypeptide reads, in one-letter code: UDP-N-acetylmuramoylalanine--D-glutamate ligase (452 aa).

119–125 provides a ligand contact to ATP; the sequence is GSNGKTT.

It belongs to the MurCDEF family.

It is found in the cytoplasm. The catalysed reaction is UDP-N-acetyl-alpha-D-muramoyl-L-alanine + D-glutamate + ATP = UDP-N-acetyl-alpha-D-muramoyl-L-alanyl-D-glutamate + ADP + phosphate + H(+). The protein operates within cell wall biogenesis; peptidoglycan biosynthesis. Functionally, cell wall formation. Catalyzes the addition of glutamate to the nucleotide precursor UDP-N-acetylmuramoyl-L-alanine (UMA). The protein is UDP-N-acetylmuramoylalanine--D-glutamate ligase of Streptococcus pyogenes serotype M2 (strain MGAS10270).